The primary structure comprises 146 residues: Hemoglobin subunit beta-1 (146 aa).

Residues His-2 to His-146 enclose the Globin domain. Heme b-binding residues include His-63 and His-92.

The protein belongs to the globin family. The major hemoglobin component (HbIII) is a tetramer of two alpha-2 chains and two beta-1 chains. Red blood cells.

Its function is as follows. Involved in oxygen transport from the lung to the various peripheral tissues. The polypeptide is Hemoglobin subunit beta-1 (HBB1) (Varanus albigularis (White-throated monitor)).